We begin with the raw amino-acid sequence, 461 residues long: Cysteine--tRNA ligase (461 aa).

C28 contacts Zn(2+). The 'HIGH' region motif lies at I30–H40. Zn(2+)-binding residues include C209, H234, and E238. Positions K266–S270 match the 'KMSKS' region motif. An ATP-binding site is contributed by K269.

This sequence belongs to the class-I aminoacyl-tRNA synthetase family. As to quaternary structure, monomer. Requires Zn(2+) as cofactor.

Its subcellular location is the cytoplasm. The enzyme catalyses tRNA(Cys) + L-cysteine + ATP = L-cysteinyl-tRNA(Cys) + AMP + diphosphate. The protein is Cysteine--tRNA ligase of Yersinia enterocolitica serotype O:8 / biotype 1B (strain NCTC 13174 / 8081).